A 209-amino-acid chain; its full sequence is Small ribosomal subunit protein uS4 (209 aa).

The segment at 22 to 45 is disordered; sequence RGRNPLLRKPNPPGQHGMQRKKKS. The S4 RNA-binding domain occupies 93 to 154; that stretch reads CRLDNIVYRL…KSRRLAIVTE (62 aa).

It belongs to the universal ribosomal protein uS4 family. Part of the 30S ribosomal subunit. Contacts protein S5. The interaction surface between S4 and S5 is involved in control of translational fidelity.

One of the primary rRNA binding proteins, it binds directly to 16S rRNA where it nucleates assembly of the body of the 30S subunit. In terms of biological role, with S5 and S12 plays an important role in translational accuracy. The polypeptide is Small ribosomal subunit protein uS4 (Chlamydia muridarum (strain MoPn / Nigg)).